We begin with the raw amino-acid sequence, 258 residues long: Deoxyribose-phosphate aldolase (258 aa).

Residue Asp101 is the Proton donor/acceptor of the active site. The active-site Schiff-base intermediate with acetaldehyde is Lys166. The active-site Proton donor/acceptor is the Lys200.

This sequence belongs to the DeoC/FbaB aldolase family. DeoC type 2 subfamily.

Its subcellular location is the cytoplasm. It catalyses the reaction 2-deoxy-D-ribose 5-phosphate = D-glyceraldehyde 3-phosphate + acetaldehyde. Its pathway is carbohydrate degradation; 2-deoxy-D-ribose 1-phosphate degradation; D-glyceraldehyde 3-phosphate and acetaldehyde from 2-deoxy-alpha-D-ribose 1-phosphate: step 2/2. Functionally, catalyzes a reversible aldol reaction between acetaldehyde and D-glyceraldehyde 3-phosphate to generate 2-deoxy-D-ribose 5-phosphate. The polypeptide is Deoxyribose-phosphate aldolase (Haemophilus ducreyi (strain 35000HP / ATCC 700724)).